Here is a 301-residue protein sequence, read N- to C-terminus: tRNA dimethylallyltransferase (301 aa).

Residue 10 to 17 (GATATGKT) participates in ATP binding. 12-17 (TATGKT) lines the substrate pocket. An interaction with substrate tRNA region spans residues 35–38 (DSRQ).

It belongs to the IPP transferase family. In terms of assembly, monomer. Mg(2+) is required as a cofactor.

The catalysed reaction is adenosine(37) in tRNA + dimethylallyl diphosphate = N(6)-dimethylallyladenosine(37) in tRNA + diphosphate. In terms of biological role, catalyzes the transfer of a dimethylallyl group onto the adenine at position 37 in tRNAs that read codons beginning with uridine, leading to the formation of N6-(dimethylallyl)adenosine (i(6)A). This chain is tRNA dimethylallyltransferase, found in Crocosphaera subtropica (strain ATCC 51142 / BH68) (Cyanothece sp. (strain ATCC 51142)).